A 178-amino-acid polypeptide reads, in one-letter code: ATP synthase subunit delta (178 aa).

The protein belongs to the ATPase delta chain family. F-type ATPases have 2 components, F(1) - the catalytic core - and F(0) - the membrane proton channel. F(1) has five subunits: alpha(3), beta(3), gamma(1), delta(1), epsilon(1). F(0) has three main subunits: a(1), b(2) and c(10-14). The alpha and beta chains form an alternating ring which encloses part of the gamma chain. F(1) is attached to F(0) by a central stalk formed by the gamma and epsilon chains, while a peripheral stalk is formed by the delta and b chains.

It is found in the cell membrane. F(1)F(0) ATP synthase produces ATP from ADP in the presence of a proton or sodium gradient. F-type ATPases consist of two structural domains, F(1) containing the extramembraneous catalytic core and F(0) containing the membrane proton channel, linked together by a central stalk and a peripheral stalk. During catalysis, ATP synthesis in the catalytic domain of F(1) is coupled via a rotary mechanism of the central stalk subunits to proton translocation. Its function is as follows. This protein is part of the stalk that links CF(0) to CF(1). It either transmits conformational changes from CF(0) to CF(1) or is implicated in proton conduction. This Streptococcus equi subsp. zooepidemicus (strain H70) protein is ATP synthase subunit delta.